A 129-amino-acid chain; its full sequence is 3-aminoacrylate deaminase RutC (129 aa).

Belongs to the RutC family.

It carries out the reaction (Z)-3-aminoacrylate + H2O + H(+) = 3-oxopropanoate + NH4(+). In terms of biological role, involved in pyrimidine catabolism. Catalyzes the deamination of 3-aminoacrylate to malonic semialdehyde, a reaction that can also occur spontaneously. RutC may facilitate the reaction and modulate the metabolic fitness, rather than catalyzing essential functions. The protein is 3-aminoacrylate deaminase RutC of Caulobacter vibrioides (strain ATCC 19089 / CIP 103742 / CB 15) (Caulobacter crescentus).